The sequence spans 320 residues: Mitochondrial glycine transporter (320 aa).

Solcar repeat units lie at residues 8 to 92 (SKTT…LRQG), 121 to 205 (LSNW…LKRR), and 223 to 307 (SSSS…LILR). Transmembrane regions (helical) follow at residues 14–39 (FAAG…TRVQ), 67–93 (GTLP…RQGL), 127–152 (LATG…VRYE), 180–203 (GFGA…EQLK), 227–253 (INFV…KTRL), and 282–300 (GLGL…AWTV).

It belongs to the mitochondrial carrier (TC 2.A.29) family. SLC25A38 subfamily.

It localises to the mitochondrion inner membrane. It carries out the reaction glycine(in) = glycine(out). In terms of biological role, mitochondrial glycine transporter that imports glycine into the mitochondrial matrix. Plays an important role in providing glycine for the first enzymatic step in heme biosynthesis, the condensation of glycine with succinyl-CoA to produce 5-aminolevulinate (ALA) in the mitochondrial matrix. The protein is Mitochondrial glycine transporter of Aspergillus fumigatus (strain CBS 144.89 / FGSC A1163 / CEA10) (Neosartorya fumigata).